Reading from the N-terminus, the 269-residue chain is Cytochrome c oxidase subunit 3 (269 aa).

7 consecutive transmembrane segments (helical) span residues P21–A41, M49–I69, G90–L110, I132–M152, T167–L187, F205–M225, and I247–W267.

It belongs to the cytochrome c oxidase subunit 3 family. In terms of assembly, component of the cytochrome c oxidase (complex IV, CIV), a multisubunit enzyme composed of a catalytic core of 3 subunits and several supernumerary subunits. The complex exists as a monomer or a dimer and forms supercomplexes (SCs) in the inner mitochondrial membrane with ubiquinol-cytochrome c oxidoreductase (cytochrome b-c1 complex, complex III, CIII).

Its subcellular location is the mitochondrion inner membrane. The enzyme catalyses 4 Fe(II)-[cytochrome c] + O2 + 8 H(+)(in) = 4 Fe(III)-[cytochrome c] + 2 H2O + 4 H(+)(out). Functionally, component of the cytochrome c oxidase, the last enzyme in the mitochondrial electron transport chain which drives oxidative phosphorylation. The respiratory chain contains 3 multisubunit complexes succinate dehydrogenase (complex II, CII), ubiquinol-cytochrome c oxidoreductase (cytochrome b-c1 complex, complex III, CIII) and cytochrome c oxidase (complex IV, CIV), that cooperate to transfer electrons derived from NADH and succinate to molecular oxygen, creating an electrochemical gradient over the inner membrane that drives transmembrane transport and the ATP synthase. Cytochrome c oxidase is the component of the respiratory chain that catalyzes the reduction of oxygen to water. Electrons originating from reduced cytochrome c in the intermembrane space (IMS) are transferred via the dinuclear copper A center (CU(A)) of subunit 2 and heme A of subunit 1 to the active site in subunit 1, a binuclear center (BNC) formed by heme A3 and copper B (CU(B)). The BNC reduces molecular oxygen to 2 water molecules using 4 electrons from cytochrome c in the IMS and 4 protons from the mitochondrial matrix. In Debaryomyces hansenii (strain ATCC 36239 / CBS 767 / BCRC 21394 / JCM 1990 / NBRC 0083 / IGC 2968) (Yeast), this protein is Cytochrome c oxidase subunit 3 (COX3).